Here is a 66-residue protein sequence, read N- to C-terminus: Stress-associated endoplasmic reticulum protein 1 (66 aa).

Positions 1–31 (MVAKQRIRMANEKHSKNITQRGNVAKTSRNA) are disordered. The segment covering 17 to 30 (NITQRGNVAKTSRN) has biased composition (polar residues). A helical transmembrane segment spans residues 39–59 (GPWLLALFIFVVCGSAIFQII).

This sequence belongs to the RAMP4 family. In terms of assembly, interacts with SEC61B, SEC61A1 and the SEC61 complex. Interacts with CANX.

It is found in the membrane. It localises to the endoplasmic reticulum membrane. Functionally, interacts with target proteins during their translocation into the lumen of the endoplasmic reticulum. Protects unfolded target proteins against degradation during ER stress. May facilitate glycosylation of target proteins after termination of ER stress. May modulate the use of N-glycosylation sites on target proteins. The polypeptide is Stress-associated endoplasmic reticulum protein 1 (SERP1) (Bos taurus (Bovine)).